A 132-amino-acid chain; its full sequence is Small ribosomal subunit protein uS8 (132 aa).

The protein belongs to the universal ribosomal protein uS8 family. Part of the 30S ribosomal subunit. Contacts proteins S5 and S12.

In terms of biological role, one of the primary rRNA binding proteins, it binds directly to 16S rRNA central domain where it helps coordinate assembly of the platform of the 30S subunit. This chain is Small ribosomal subunit protein uS8, found in Sinorhizobium fredii (strain NBRC 101917 / NGR234).